We begin with the raw amino-acid sequence, 462 residues long: UDP-N-acetylmuramoylalanine--D-glutamate ligase (462 aa).

Gly118–Thr124 contacts ATP.

Belongs to the MurCDEF family.

It localises to the cytoplasm. The catalysed reaction is UDP-N-acetyl-alpha-D-muramoyl-L-alanine + D-glutamate + ATP = UDP-N-acetyl-alpha-D-muramoyl-L-alanyl-D-glutamate + ADP + phosphate + H(+). It functions in the pathway cell wall biogenesis; peptidoglycan biosynthesis. In terms of biological role, cell wall formation. Catalyzes the addition of glutamate to the nucleotide precursor UDP-N-acetylmuramoyl-L-alanine (UMA). This chain is UDP-N-acetylmuramoylalanine--D-glutamate ligase, found in Anaeromyxobacter dehalogenans (strain 2CP-C).